The sequence spans 180 residues: Small ribosomal subunit protein bS18 (180 aa).

Disordered stretches follow at residues 1 to 26 (MKNK…AHKV) and 53 to 82 (YSDK…DKES).

Belongs to the bacterial ribosomal protein bS18 family. As to quaternary structure, part of the 30S ribosomal subunit. Forms a tight heterodimer with protein bS6.

Its function is as follows. Binds as a heterodimer with protein bS6 to the central domain of the 16S rRNA, where it helps stabilize the platform of the 30S subunit. This Karelsulcia muelleri (strain GWSS) (Sulcia muelleri) protein is Small ribosomal subunit protein bS18.